The chain runs to 458 residues: Putative non-structural protein 2 (458 aa).

Basic and acidic residues predominate over residues 1–12 (MSDTNEENRDEP). Residues 1 to 27 (MSDTNEENRDEPTVVIVGPNDAQTETT) form a disordered region.

This is Putative non-structural protein 2 (S8) from Micromonas pusilla (Picoplanktonic green alga).